The following is a 160-amino-acid chain: Major pollen allergen Bet v 1-M/N (160 aa).

Lysine 55, tyrosine 82, tyrosine 84, and asparagine 101 together coordinate brassinolide.

This sequence belongs to the BetVI family.

The protein resides in the cytoplasm. Its function is as follows. May be a general steroid carrier protein. This Betula pendula (European white birch) protein is Major pollen allergen Bet v 1-M/N (BETV1M).